The sequence spans 617 residues: V-type proton ATPase catalytic subunit A (617 aa).

257 to 264 provides a ligand contact to ATP; sequence GAFGCGKT.

This sequence belongs to the ATPase alpha/beta chains family. As to quaternary structure, V-ATPase is a heteromultimeric enzyme composed of a peripheral catalytic V1 complex (components A to H) attached to an integral membrane V0 proton pore complex (components: a, c, c', c'', d, e, f and VOA1).

The protein localises to the vacuole membrane. It carries out the reaction ATP + H2O + 4 H(+)(in) = ADP + phosphate + 5 H(+)(out). In terms of biological role, catalytic subunit of the V1 complex of vacuolar(H+)-ATPase (V-ATPase), a multisubunit enzyme composed of a peripheral complex (V1) that hydrolyzes ATP and a membrane integral complex (V0) that translocates protons. V-ATPase is responsible for acidifying and maintaining the pH of intracellular compartments. This Eremothecium gossypii (strain ATCC 10895 / CBS 109.51 / FGSC 9923 / NRRL Y-1056) (Yeast) protein is V-type proton ATPase catalytic subunit A (VMA1).